We begin with the raw amino-acid sequence, 597 residues long: MALSFFSGGGSASHAKYFDIRLDEDYIVFRGGEQEAASAHLSGKLLLCLSEPLSIKHIRLHLTGISRVCWHLPSSSAGGGRKSWRERVIYEKTWRFRDPGKGKTEILPAGNYEYPFNLVLEGNMPESIEGLSDTYITYRFKAEIGRKYAKDIIVRKPLRIIRTLEPSALELAHAMSVENIWPNKIEYSISTPTKAVIFGTSIRVDFKLIPLLKGLTIGQIVSQLIESHDLTLNPEDPDSIRNTYKNTRTILNDEFELDHDNALEIIDEAAEGYQFSRYLDLPKTLTRCLQDTDTKGIKVRHKLKFRVQLMNPDGHISELRATLPVSIFISPNLAIDENNNLVDQTPQSAQRAINDIAQQAPPLYGEHQFDQLYSELDPNGYRTPGPGSGPGTPFGTLSRNLSAENLASMNALTNTDISASALHSRLSNLSNLNITRPHQPSPTDHESQNDSEHRRLGVPADYFGPSSGSNSHSPSSPVLSRRPSDEVDHEHVPSGMATPFHPQYAEVETLSRVPSYSTAVRTTKTFPFRHLSSHLSKPISEMLGADLANSSLPWIFFIIGRALVTLTPLVTMMKTEDCDSFKLGLESRIRTEAASPA.

Disordered stretches follow at residues 375 to 398 (ELDP…GTLS) and 432 to 499 (LNIT…MATP). The span at 443 to 455 (TDHESQNDSEHRR) shows a compositional bias: basic and acidic residues. A compositionally biased stretch (low complexity) spans 465 to 481 (PSSGSNSHSPSSPVLSR). Residues 482 to 492 (RPSDEVDHEHV) show a composition bias toward basic and acidic residues.

It belongs to the arrestin family. Interacts with hulA.

Component of the regulatory network controlling carbon source utilization through ubiquitination and deubiquitination involving creA, creB, creC, creD and acrB. May be involved in signaling by recognizing appropriately phosphorylated substrates via its arrestin domains and then recruit a HECT-type ubiquitin ligase such as hulA, leading to ubiquitination of the substrate, providing a link between ubiquitination and phosphorylation in protein regulation and stability. The chain is Probable HECT-type ubiquitin ligase-interacting protein creD (creD) from Aspergillus oryzae (strain ATCC 42149 / RIB 40) (Yellow koji mold).